The chain runs to 270 residues: Transmembrane protein 176B (270 aa).

4 helical membrane passes run 65–85 (LALGVTQILLGVVSCVLGVCL), 95–115 (ASGCAFWAGSVVIAAGAGAIV), 127–147 (ISSLLTLAGFATAMAAVVLCV), and 209–229 (LFLAVCVLKVIVSLVSLGVGL). 4 positions are modified to phosphoserine: Ser-236, Ser-245, Ser-254, and Ser-258. Residues 237–270 (SQPLNEEGSEKRLLGENSVPPSPSREQTSTAIVL) form a disordered region. Positions 260–270 (SREQTSTAIVL) are enriched in polar residues.

This sequence belongs to the TMEM176 family. Expressed in lung and dermal fibroblasts.

Its subcellular location is the nucleus membrane. In terms of biological role, may play a role in the process of maturation of dendritic cells. Required for the development of cerebellar granule cells. The polypeptide is Transmembrane protein 176B (TMEM176B) (Homo sapiens (Human)).